Here is a 300-residue protein sequence, read N- to C-terminus: ClpXP adapter protein SpxH (300 aa).

Belongs to the SpxH family. Interacts with Spx.

The protein localises to the cytoplasm. In terms of biological role, adapter protein required for efficient degradation of Spx by ClpXP under non-stress conditions. Interaction with Spx stabilizes Spx and exposes the C-terminus of Spx for recognition and proteolysis by ClpXP. This chain is ClpXP adapter protein SpxH, found in Bacillus licheniformis (strain ATCC 14580 / DSM 13 / JCM 2505 / CCUG 7422 / NBRC 12200 / NCIMB 9375 / NCTC 10341 / NRRL NRS-1264 / Gibson 46).